The following is a 109-amino-acid chain: DNA-binding protein Mpal_0536 (109 aa).

The segment at 14-35 (MAQLQSQQMDQQQMDEEKQRAK) is disordered. The segment covering 16–25 (QLQSQQMDQQ) has biased composition (low complexity).

It belongs to the PDCD5 family.

The chain is DNA-binding protein Mpal_0536 from Methanosphaerula palustris (strain ATCC BAA-1556 / DSM 19958 / E1-9c).